Here is a 242-residue protein sequence, read N- to C-terminus: Carboxy-S-adenosyl-L-methionine synthase (242 aa).

S-adenosyl-L-methionine is bound by residues Tyr39, Gly64–Ser66, Asp89–Asn90, Asp117–Ile118, Asn132, and Arg199.

It belongs to the class I-like SAM-binding methyltransferase superfamily. Cx-SAM synthase family. As to quaternary structure, homodimer.

The enzyme catalyses prephenate + S-adenosyl-L-methionine = carboxy-S-adenosyl-L-methionine + 3-phenylpyruvate + H2O. Functionally, catalyzes the conversion of S-adenosyl-L-methionine (SAM) to carboxy-S-adenosyl-L-methionine (Cx-SAM). The polypeptide is Carboxy-S-adenosyl-L-methionine synthase (Aliivibrio salmonicida (strain LFI1238) (Vibrio salmonicida (strain LFI1238))).